Reading from the N-terminus, the 305-residue chain is Probable 5-dehydro-4-deoxyglucarate dehydratase (305 aa).

Belongs to the DapA family.

The catalysed reaction is 5-dehydro-4-deoxy-D-glucarate + H(+) = 2,5-dioxopentanoate + CO2 + H2O. Its pathway is carbohydrate acid metabolism; D-glucarate degradation; 2,5-dioxopentanoate from D-glucarate: step 2/2. In Xanthomonas campestris pv. campestris (strain 8004), this protein is Probable 5-dehydro-4-deoxyglucarate dehydratase.